A 279-amino-acid chain; its full sequence is Tryptophan 2,3-dioxygenase (279 aa).

Residues 48 to 52, tyrosine 110, and arginine 114 each bind substrate; that span reads FIIQH. Histidine 237 contributes to the heme binding site. Threonine 251 contacts substrate.

The protein belongs to the tryptophan 2,3-dioxygenase family. As to quaternary structure, homotetramer. Heme is required as a cofactor.

It catalyses the reaction L-tryptophan + O2 = N-formyl-L-kynurenine. It participates in amino-acid degradation; L-tryptophan degradation via kynurenine pathway; L-kynurenine from L-tryptophan: step 1/2. Its function is as follows. Heme-dependent dioxygenase that catalyzes the oxidative cleavage of the L-tryptophan (L-Trp) pyrrole ring and converts L-tryptophan to N-formyl-L-kynurenine. Catalyzes the oxidative cleavage of the indole moiety. The chain is Tryptophan 2,3-dioxygenase from Bradyrhizobium sp. (strain ORS 278).